The following is a 131-amino-acid chain: Small ribosomal subunit protein bS6 (131 aa).

The interval 96 to 131 (VTEASPMAKAKDERDSRRGPAGDRSYDEANAEEIAE) is disordered. The segment covering 104–122 (KAKDERDSRRGPAGDRSYD) has biased composition (basic and acidic residues).

The protein belongs to the bacterial ribosomal protein bS6 family.

Binds together with bS18 to 16S ribosomal RNA. The polypeptide is Small ribosomal subunit protein bS6 (Shewanella sp. (strain MR-4)).